Here is a 122-residue protein sequence, read N- to C-terminus: Large ribosomal subunit protein uL24 (122 aa).

This sequence belongs to the universal ribosomal protein uL24 family. As to quaternary structure, part of the 50S ribosomal subunit.

Functionally, one of two assembly initiator proteins, it binds directly to the 5'-end of the 23S rRNA, where it nucleates assembly of the 50S subunit. Located at the polypeptide exit tunnel on the outside of the subunit. In Pyrobaculum arsenaticum (strain DSM 13514 / JCM 11321 / PZ6), this protein is Large ribosomal subunit protein uL24.